The chain runs to 212 residues: Holliday junction branch migration complex subunit RuvA (212 aa).

Residues 1 to 70 (MISYLKGSPI…EDQQILYGFS (70 aa)) are domain I. Residues 71 to 149 (TTAERELFRQ…QWRKMVGVTV (79 aa)) form a domain II region. A flexible linker region spans residues 150–160 (TSSAAMPSLEI). The tract at residues 160-212 (ILEDIEMTLLALGYTNEEINKAISTLSQDNLMLKNTNTEEWIKEAIAWLSQGT) is domain III.

Belongs to the RuvA family. As to quaternary structure, homotetramer. Forms an RuvA(8)-RuvB(12)-Holliday junction (HJ) complex. HJ DNA is sandwiched between 2 RuvA tetramers; dsDNA enters through RuvA and exits via RuvB. An RuvB hexamer assembles on each DNA strand where it exits the tetramer. Each RuvB hexamer is contacted by two RuvA subunits (via domain III) on 2 adjacent RuvB subunits; this complex drives branch migration. In the full resolvosome a probable DNA-RuvA(4)-RuvB(12)-RuvC(2) complex forms which resolves the HJ.

Its subcellular location is the cytoplasm. Functionally, the RuvA-RuvB-RuvC complex processes Holliday junction (HJ) DNA during genetic recombination and DNA repair, while the RuvA-RuvB complex plays an important role in the rescue of blocked DNA replication forks via replication fork reversal (RFR). RuvA specifically binds to HJ cruciform DNA, conferring on it an open structure. The RuvB hexamer acts as an ATP-dependent pump, pulling dsDNA into and through the RuvAB complex. HJ branch migration allows RuvC to scan DNA until it finds its consensus sequence, where it cleaves and resolves the cruciform DNA. In Crocosphaera subtropica (strain ATCC 51142 / BH68) (Cyanothece sp. (strain ATCC 51142)), this protein is Holliday junction branch migration complex subunit RuvA.